Reading from the N-terminus, the 120-residue chain is NAD(P)H-quinone oxidoreductase subunit 3, chloroplastic (120 aa).

Transmembrane regions (helical) follow at residues isoleucine 9–glycine 29, tyrosine 62–tryptophan 82, and valine 88–leucine 108.

The protein belongs to the complex I subunit 3 family. NDH is composed of at least 16 different subunits, 5 of which are encoded in the nucleus.

It localises to the plastid. It is found in the chloroplast thylakoid membrane. The enzyme catalyses a plastoquinone + NADH + (n+1) H(+)(in) = a plastoquinol + NAD(+) + n H(+)(out). It carries out the reaction a plastoquinone + NADPH + (n+1) H(+)(in) = a plastoquinol + NADP(+) + n H(+)(out). Functionally, NDH shuttles electrons from NAD(P)H:plastoquinone, via FMN and iron-sulfur (Fe-S) centers, to quinones in the photosynthetic chain and possibly in a chloroplast respiratory chain. The immediate electron acceptor for the enzyme in this species is believed to be plastoquinone. Couples the redox reaction to proton translocation, and thus conserves the redox energy in a proton gradient. In Trachelium caeruleum (Blue throatwort), this protein is NAD(P)H-quinone oxidoreductase subunit 3, chloroplastic.